Reading from the N-terminus, the 553-residue chain is Zinc finger protein 324A (553 aa).

The KRAB domain occupies 1-72; that stretch reads MAFEDVAVYF…SGTDTTLSRT (72 aa). The short motif at 130–135 is the Nuclear localization signal element; it reads PSRERK. The disordered stretch occupies residues 186–221; sequence GRQPRTPERQKPCAQEVPGRTFGSAQDLEAAGGRGH. 9 C2H2-type zinc fingers span residues 257–279, 285–307, 313–335, 341–363, 369–391, 397–419, 425–447, 453–475, and 481–503; these read FECR…LRTH, YECA…QRIH, YACP…QRIH, FRCS…RKIH, YACA…ERTH, FVCA…QRVH, FACP…QLLH, FRCV…RRIH, and FVCT…QRIH. A disordered region spans residues 502 to 553; the sequence is IHTGEKTVRRSRASLHPQARSVAGASSEGAPAKETEPTPASGPAAVSQPAEV.

The protein belongs to the krueppel C2H2-type zinc-finger protein family. In terms of tissue distribution, expressed at high levels in the spleen, thymus, and PBMC, at low levels in the prostate, ovary, small intestine, colon (mucosal lining), placenta, lung, and pancreas, and very weakly expressed in the liver and kidney.

Its subcellular location is the nucleus. May be involved in transcriptional regulation. May be involved in regulation of cell proliferation. The protein is Zinc finger protein 324A (ZNF324) of Homo sapiens (Human).